The chain runs to 448 residues: C4-dicarboxylate transport protein (448 aa).

The next 7 membrane-spanning stretches (helical) occupy residues 22 to 42 (FQVV…PAFA), 55 to 75 (LVKM…IAGM), 90 to 110 (TYFL…AHVV), 137 to 157 (ELSL…SAFV), 159 to 179 (GNIL…ALVG), 199 to 219 (LVHM…AFTI), and 232 to 252 (WLVG…LGIV). The segment at 428–448 (RAPPLQAPVPPPDAVAPVSAR) is disordered. Over residues 432–441 (LQAPVPPPDA) the composition is skewed to pro residues.

The protein belongs to the dicarboxylate/amino acid:cation symporter (DAACS) (TC 2.A.23) family.

The protein localises to the cell inner membrane. Functionally, responsible for the transport of dicarboxylates such as succinate, fumarate, and malate from the periplasm across the membrane. In Xanthomonas campestris pv. campestris (strain 8004), this protein is C4-dicarboxylate transport protein.